The chain runs to 61 residues: UPF0434 protein MS0934 (61 aa).

The protein belongs to the UPF0434 family.

This Mannheimia succiniciproducens (strain KCTC 0769BP / MBEL55E) protein is UPF0434 protein MS0934.